The primary structure comprises 432 residues: UDP-glucose 6-dehydrogenase (432 aa).

Residues 2–19, Val11, Asp30, Lys35, Thr121, and Glu152 contribute to the NAD(+) site; that span reads NITF…GIIM. Residues 148–152, Lys202, Asn206, 247–251, and Gly255 each bind substrate; these read EFLRE and FLNAG. The active-site Nucleophile is the Cys258. Lys261 lines the NAD(+) pocket. Lys319 is a binding site for substrate. Residue Arg326 participates in NAD(+) binding.

The protein belongs to the UDP-glucose/GDP-mannose dehydrogenase family.

The enzyme catalyses UDP-alpha-D-glucose + 2 NAD(+) + H2O = UDP-alpha-D-glucuronate + 2 NADH + 3 H(+). The protein operates within nucleotide-sugar biosynthesis; UDP-alpha-D-glucuronate biosynthesis; UDP-alpha-D-glucuronate from UDP-alpha-D-glucose: step 1/1. The chain is UDP-glucose 6-dehydrogenase (udg) from Rickettsia conorii (strain ATCC VR-613 / Malish 7).